A 131-amino-acid polypeptide reads, in one-letter code: Profilin-4 (131 aa).

An intrachain disulfide couples Cys-13 to Cys-115. The short motif at 81–97 (AVIRGKKGAGGITIKKT) is the Involved in PIP2 interaction element. Phosphothreonine is present on Thr-111.

This sequence belongs to the profilin family. Occurs in many kinds of cells as a complex with monomeric actin in a 1:1 ratio. Phosphorylated by MAP kinases.

The protein resides in the cytoplasm. The protein localises to the cytoskeleton. In terms of biological role, binds to actin and affects the structure of the cytoskeleton. At high concentrations, profilin prevents the polymerization of actin, whereas it enhances it at low concentrations. This Phleum pratense (Common timothy) protein is Profilin-4.